An 813-amino-acid chain; its full sequence is Phenylalanine--tRNA ligase beta subunit (813 aa).

Positions 42–151 (AKDFNHVVIG…ADAPVGKAYA (110 aa)) constitute a tRNA-binding domain. A B5 domain is found at 405-480 (VKKAPVDITI…RLNGYEHIPE (76 aa)). Positions 458, 464, 467, and 468 each coordinate Mg(2+). Residues 720-813 (SKFPIVERDF…LKKNFDLSVR (94 aa)) enclose the FDX-ACB domain.

It belongs to the phenylalanyl-tRNA synthetase beta subunit family. Type 1 subfamily. Tetramer of two alpha and two beta subunits. Mg(2+) is required as a cofactor.

It is found in the cytoplasm. The enzyme catalyses tRNA(Phe) + L-phenylalanine + ATP = L-phenylalanyl-tRNA(Phe) + AMP + diphosphate + H(+). In Bdellovibrio bacteriovorus (strain ATCC 15356 / DSM 50701 / NCIMB 9529 / HD100), this protein is Phenylalanine--tRNA ligase beta subunit.